We begin with the raw amino-acid sequence, 162 residues long: UPF0305 protein MMP0665 (162 aa).

Belongs to the UPF0305 family.

This chain is UPF0305 protein MMP0665, found in Methanococcus maripaludis (strain DSM 14266 / JCM 13030 / NBRC 101832 / S2 / LL).